Here is a 366-residue protein sequence, read N- to C-terminus: RNA 3'-terminal phosphate cyclase (366 aa).

6 residues coordinate ATP: Q104, P131, Y294, D297, Q298, and H320. H320 serves as the catalytic Tele-AMP-histidine intermediate.

It belongs to the RNA 3'-terminal cyclase family. Type 1 subfamily.

The protein resides in the nucleus. Its subcellular location is the nucleoplasm. The catalysed reaction is a 3'-end 3'-phospho-ribonucleotide-RNA + ATP = a 3'-end 2',3'-cyclophospho-ribonucleotide-RNA + AMP + diphosphate. In terms of biological role, catalyzes the conversion of 3'-phosphate to a 2',3'-cyclic phosphodiester at the end of RNA. The mechanism of action of the enzyme occurs in 3 steps: (A) adenylation of the enzyme by ATP; (B) transfer of adenylate to an RNA-N3'P to produce RNA-N3'PP5'A; (C) and attack of the adjacent 2'-hydroxyl on the 3'-phosphorus in the diester linkage to produce the cyclic end product. Likely functions in some aspects of cellular RNA processing. Function plays an important role in regulating axon regeneration by inhibiting central nervous system (CNS) axon regeneration following optic nerve injury. This chain is RNA 3'-terminal phosphate cyclase (RTCA), found in Macaca fascicularis (Crab-eating macaque).